Reading from the N-terminus, the 83-residue chain is Large ribosomal subunit protein eL43 (83 aa).

Zn(2+) is bound by residues Cys-38, Cys-41, Cys-56, and Cys-59. The segment at 38 to 59 (CPVCGRRAVKRISTGIWQCTKC) adopts a C4-type zinc-finger fold.

It belongs to the eukaryotic ribosomal protein eL43 family. Putative zinc-binding subfamily. In terms of assembly, part of the 50S ribosomal subunit. Requires Zn(2+) as cofactor.

Binds to the 23S rRNA. In Pyrococcus horikoshii (strain ATCC 700860 / DSM 12428 / JCM 9974 / NBRC 100139 / OT-3), this protein is Large ribosomal subunit protein eL43.